We begin with the raw amino-acid sequence, 98 residues long: NADH-ubiquinone oxidoreductase chain 4L (98 aa).

The next 3 membrane-spanning stretches (helical) occupy residues 1–21 (MTPT…GMLT), 27–47 (VASL…ATLI), and 61–81 (IILL…LISI).

It belongs to the complex I subunit 4L family. In terms of assembly, core subunit of respiratory chain NADH dehydrogenase (Complex I) which is composed of 45 different subunits.

The protein localises to the mitochondrion inner membrane. It catalyses the reaction a ubiquinone + NADH + 5 H(+)(in) = a ubiquinol + NAD(+) + 4 H(+)(out). Its function is as follows. Core subunit of the mitochondrial membrane respiratory chain NADH dehydrogenase (Complex I) which catalyzes electron transfer from NADH through the respiratory chain, using ubiquinone as an electron acceptor. Part of the enzyme membrane arm which is embedded in the lipid bilayer and involved in proton translocation. This Macaca fascicularis (Crab-eating macaque) protein is NADH-ubiquinone oxidoreductase chain 4L (MT-ND4L).